The primary structure comprises 461 residues: Argininosuccinate lyase (461 aa).

Belongs to the lyase 1 family. Argininosuccinate lyase subfamily.

It localises to the cytoplasm. It catalyses the reaction 2-(N(omega)-L-arginino)succinate = fumarate + L-arginine. Its pathway is amino-acid biosynthesis; L-arginine biosynthesis; L-arginine from L-ornithine and carbamoyl phosphate: step 3/3. This chain is Argininosuccinate lyase, found in Symbiobacterium thermophilum (strain DSM 24528 / JCM 14929 / IAM 14863 / T).